The primary structure comprises 198 residues: Ribonuclease HII (198 aa).

An RNase H type-2 domain is found at 11–198 (ELIAGVDEVG…SPVRKLLENE (188 aa)). The a divalent metal cation site is built by Asp-17, Glu-18, and Asp-109.

This sequence belongs to the RNase HII family. Mn(2+) is required as a cofactor. It depends on Mg(2+) as a cofactor.

The protein localises to the cytoplasm. It catalyses the reaction Endonucleolytic cleavage to 5'-phosphomonoester.. Endonuclease that specifically degrades the RNA of RNA-DNA hybrids. The protein is Ribonuclease HII of Mannheimia succiniciproducens (strain KCTC 0769BP / MBEL55E).